The primary structure comprises 141 residues: Large ribosomal subunit protein uL11 (141 aa).

It belongs to the universal ribosomal protein uL11 family. As to quaternary structure, part of the ribosomal stalk of the 50S ribosomal subunit. Interacts with L10 and the large rRNA to form the base of the stalk. L10 forms an elongated spine to which L12 dimers bind in a sequential fashion forming a multimeric L10(L12)X complex. In terms of processing, one or more lysine residues are methylated.

Forms part of the ribosomal stalk which helps the ribosome interact with GTP-bound translation factors. This Opitutus terrae (strain DSM 11246 / JCM 15787 / PB90-1) protein is Large ribosomal subunit protein uL11.